The primary structure comprises 272 residues: Glutamate 5-kinase (272 aa).

Lysine 14 contributes to the ATP binding site. Substrate contacts are provided by serine 54, aspartate 141, and asparagine 157. ATP-binding positions include 177 to 178 (SD) and 219 to 225 (TGGMLSK).

The protein belongs to the glutamate 5-kinase family.

Its subcellular location is the cytoplasm. It catalyses the reaction L-glutamate + ATP = L-glutamyl 5-phosphate + ADP. It participates in amino-acid biosynthesis; L-proline biosynthesis; L-glutamate 5-semialdehyde from L-glutamate: step 1/2. Functionally, catalyzes the transfer of a phosphate group to glutamate to form L-glutamate 5-phosphate. This Streptococcus pyogenes serotype M28 (strain MGAS6180) protein is Glutamate 5-kinase.